The chain runs to 257 residues: Isoprenyl transferase 1 (257 aa).

Residue D37 is part of the active site. D37 lines the Mg(2+) pocket. Substrate contacts are provided by residues G38–R41, W42, H54, and S82–D84. The active-site Proton acceptor is the N85. Substrate contacts are provided by residues F86, R88, R206, and R212–S214. E225 contributes to the Mg(2+) binding site.

This sequence belongs to the UPP synthase family. As to quaternary structure, homodimer. Requires Mg(2+) as cofactor.

Functionally, catalyzes the condensation of isopentenyl diphosphate (IPP) with allylic pyrophosphates generating different type of terpenoids. This is Isoprenyl transferase 1 from Streptomyces avermitilis (strain ATCC 31267 / DSM 46492 / JCM 5070 / NBRC 14893 / NCIMB 12804 / NRRL 8165 / MA-4680).